Consider the following 345-residue polypeptide: Protein GAMETE CELL DEFECTIVE 1, mitochondrial (345 aa).

Residues 1–43 (MLALRKTLLHGRLPAAPPAAAAAAIASRIPALLRRLSSSPGDG) constitute a mitochondrion transit peptide. A disordered region spans residues 36–81 (LSSSPGDGQGGDEWGSSWSTGITKEHFDGSDAAVGRPVTSPSKPVS).

In terms of tissue distribution, expressed in roots, stems, leaves and florets.

It localises to the mitochondrion. In terms of biological role, essential for fertility (male and female gametophyte functions and development). Required for the integrity of female gametic mitochondria. Involved in embryo apical-basal patterning, and particularly dorsal-ventral patterning, during early embryogenesis, and endosperm free nucleus positioning and development as well as early endosperm development, probably by modulating the expression pattern of related genes (e.g. AL1, MYB3/AL2, CYP78A13/GE, PNH1, HAZ1, MPK6 and OSH1). Has function in triggering of endosperm programmed cell death (PCD) leading to syncytial endosperm cellularization and starchy endosperm cell maturation. Implicated in central vacuole dynamics necessary for microspore development leading to pollen production, and for pollen development and germination. The sequence is that of Protein GAMETE CELL DEFECTIVE 1, mitochondrial from Oryza sativa subsp. japonica (Rice).